The primary structure comprises 333 residues: NADH-quinone oxidoreductase subunit H (333 aa).

Helical transmembrane passes span 15 to 35, 88 to 108, 117 to 137, 159 to 179, 191 to 211, 239 to 259, 272 to 294, and 313 to 333; these read FFIF…FVTY, FILA…VIPF, IGVG…GVVT, ISYE…AGSL, VWYI…AVAE, WAFF…LITV, GFIP…LIWF, and ILLP…ELFF.

This sequence belongs to the complex I subunit 1 family. As to quaternary structure, NDH-1 is composed of 14 different subunits. Subunits NuoA, H, J, K, L, M, N constitute the membrane sector of the complex.

It localises to the cell membrane. It catalyses the reaction a quinone + NADH + 5 H(+)(in) = a quinol + NAD(+) + 4 H(+)(out). NDH-1 shuttles electrons from NADH, via FMN and iron-sulfur (Fe-S) centers, to quinones in the respiratory chain. The immediate electron acceptor for the enzyme in this species is believed to be ubiquinone. Couples the redox reaction to proton translocation (for every two electrons transferred, four hydrogen ions are translocated across the cytoplasmic membrane), and thus conserves the redox energy in a proton gradient. This subunit may bind ubiquinone. This Bacillus mycoides (strain KBAB4) (Bacillus weihenstephanensis) protein is NADH-quinone oxidoreductase subunit H.